Reading from the N-terminus, the 449-residue chain is Required for meiotic nuclear division protein 1 homolog (449 aa).

The transit peptide at 1–12 directs the protein to the mitochondrion; that stretch reads MPATLLRAVARS.

Belongs to the RMD1/sif2 family. Homooligomer.

The protein localises to the mitochondrion. Required for mitochondrial translation, possibly by coordinating the assembly or maintenance of the mitochondrial ribosome. The chain is Required for meiotic nuclear division protein 1 homolog (RMND1) from Homo sapiens (Human).